Reading from the N-terminus, the 192-residue chain is I-Kappa-B like protein H1 (192 aa).

ANK repeat units lie at residues lysine 94–glycine 126, alanine 131–valine 161, and glycine 165–methionine 192.

This sequence belongs to the polydnaviridae I-Kappa-B-like protein family.

Suppresses the host immune response through NF-kappa-B inactivation. Possesses ankyrin repeat domains required for NF-kappa-B binding but lacks the regulatory regions required for dissociation from NF-kappa-B and degradation. Therefore, prevents host NF-kappa-B release and subsequent activation. The protein is I-Kappa-B like protein H1 (H4) of Microplitis demolitor bracovirus (isolate Webb) (MdBV).